We begin with the raw amino-acid sequence, 321 residues long: N-acetyllactosaminide alpha-1,3-galactosyltransferase-like 1 (321 aa).

Topologically, residues 1-6 (MQYKKE) are cytoplasmic. Residues 7 to 24 (TLLLILLAILLALTQRYS) form a helical; Signal-anchor for type II membrane protein membrane-spanning segment. At 25 to 321 (RTKDHLQKMY…IKVAWQPRIT (297 aa)) the chain is on the lumenal side. N-linked (GlcNAc...) asparagine glycans are attached at residues Asn-87 and Asn-99. Substrate is bound by residues 95 to 100 (FATGNF), 187 to 189 (TAN), and 209 to 212 (HAWW). Glu-277 (nucleophile) is an active-site residue.

It belongs to the glycosyltransferase 6 family. The cofactor is Mn(2+).

It localises to the golgi apparatus. The protein resides in the golgi stack membrane. It catalyses the reaction a beta-D-galactosyl-(1-&gt;4)-N-acetyl-beta-D-glucosaminyl derivative + UDP-alpha-D-galactose = an alpha-D-galactosyl-(1-&gt;3)-beta-D-galactosyl-(1-&gt;4)-N-acetyl-beta-D-glucosaminyl derivative + UDP + H(+). Its pathway is protein modification; protein glycosylation. Functionally, synthesizes the galactose-alpha(1,3)-galactose group by catalyzing the transfer of a galactose residue, with an alpha-1,3 linkage, on terminal lactosaminide (Gal-beta-1,4-GlcNAc-R) disaccharide borne by a glycoprotein or a glycolipid. The chain is N-acetyllactosaminide alpha-1,3-galactosyltransferase-like 1 (Ggta1l1) from Rattus norvegicus (Rat).